Reading from the N-terminus, the 207-residue chain is Octanoyltransferase (207 aa).

The 177-residue stretch at 27 to 203 (ADTEDELWVV…HLETQFTPKA (177 aa)) folds into the BPL/LPL catalytic domain. Substrate-binding positions include 66–73 (RGGQITYH), 133–135 (SLG), and 146–148 (GLA). The active-site Acyl-thioester intermediate is the Cys164.

Belongs to the LipB family.

It is found in the cytoplasm. The catalysed reaction is octanoyl-[ACP] + L-lysyl-[protein] = N(6)-octanoyl-L-lysyl-[protein] + holo-[ACP] + H(+). It functions in the pathway protein modification; protein lipoylation via endogenous pathway; protein N(6)-(lipoyl)lysine from octanoyl-[acyl-carrier-protein]: step 1/2. Its function is as follows. Catalyzes the transfer of endogenously produced octanoic acid from octanoyl-acyl-carrier-protein onto the lipoyl domains of lipoate-dependent enzymes. Lipoyl-ACP can also act as a substrate although octanoyl-ACP is likely to be the physiological substrate. This chain is Octanoyltransferase, found in Neisseria meningitidis serogroup A / serotype 4A (strain DSM 15465 / Z2491).